We begin with the raw amino-acid sequence, 479 residues long: Ammonium transporter Rh type C (479 aa).

Topologically, residues 1–9 (MAWNTNLRW) are cytoplasmic. A helical transmembrane segment spans residues 10–30 (RLPLTCLLLQVVMVILFGVFV). The Extracellular segment spans residues 31–60 (RYDFEADAHWWSERTHKNLSDVENEFYYRY). An N-linked (GlcNAc...) asparagine glycan is attached at Asn48. A helical transmembrane segment spans residues 61–81 (PSFQDVHVMVFVGFGFLMTFL). Residues 82-85 (QRYG) lie on the Cytoplasmic side of the membrane. A helical transmembrane segment spans residues 86 to 106 (FSAVGFNFLLAAFGIQWALLM). Topologically, residues 107 to 123 (QGWFHFLQGRYIVVGVE) are extracellular. The chain crosses the membrane as a helical span at residues 124-144 (NLINADFCVASVCVAFGAVLG). The Cytoplasmic portion of the chain corresponds to 145 to 148 (KVSP). A helical transmembrane segment spans residues 149–169 (IQLLIMTFFQVTLFAVNEFIL). Residues 170-177 (LNLLKVKD) are Extracellular-facing. A helical membrane pass occupies residues 178–200 (AGGSMTIHTFGAYFGLTVTRILY). Over 201 to 218 (RRNLEQSKERQNSVYQSD) the chain is Cytoplasmic. A helical membrane pass occupies residues 219–239 (LFAMIGTLFLWMYWPSFNSAI). Residues 240–250 (SYHGDSQHRAA) are Extracellular-facing. Residues 251–271 (INTYCSLAACVLTSVAISSAL) traverse the membrane as a helical segment. Residues 272 to 281 (HKKGKLDMVH) are Cytoplasmic-facing. Residues 282 to 302 (IQNATLAGGVAVGTAAEMMLM) form a helical membrane-spanning segment. Position 303 (Pro303) is a topological domain, extracellular. A helical membrane pass occupies residues 304–324 (YGALIIGFVCGIISTLGFVYL). Topologically, residues 325–345 (TPFLESRLHIQDTCGINNLHG) are cytoplasmic. The chain crosses the membrane as a helical span at residues 346–366 (IPGIIGGIVGAVTAASASLEV). The Extracellular portion of the chain corresponds to 367–394 (YGKEGLVHSFDFQGFKGDWTARTQGKFQ). A helical transmembrane segment spans residues 395 to 415 (IYGLLVTLAMALMGGIIVGLI). Residues 416 to 479 (LRLPFWGQPS…PMASSVPLVP (64 aa)) lie on the Cytoplasmic side of the membrane.

The protein belongs to the ammonium transporter (TC 2.A.49) family. Rh subfamily. In terms of assembly, homotrimer. N-glycosylated.

It localises to the cell membrane. The protein localises to the apical cell membrane. It catalyses the reaction NH4(+)(in) = NH4(+)(out). The catalysed reaction is methylamine(out) = methylamine(in). The enzyme catalyses CO2(out) = CO2(in). In terms of biological role, ammonium transporter involved in the maintenance of acid-base homeostasis. Transports ammonium and its related derivative methylammonium across the plasma membrane of epithelial cells likely contributing to renal transepithelial ammonia transport and ammonia metabolism. Postulated to primarily mediate an electroneutral bidirectional transport of NH3 ammonia species according to a mechanism that implies interaction of an NH4(+) ion with acidic residues of the pore entry followed by dissociation of NH4(+) into NH3 and H(+). As a result NH3 transits through the central pore and is protonated on the extracellular side reforming NH4(+). May act as a CO2 channel providing for renal acid secretion. The polypeptide is Ammonium transporter Rh type C (RHCG) (Pan troglodytes (Chimpanzee)).